Consider the following 284-residue polypeptide: MIFLSQAQIDALLLEDIQGGDLTTRALNIGHQHGYIEFFLRQGGCVSGISVACKMLTTLGLTIDDAVSDGSQANAGQRLIRAQGNAAALHQGWKAVQNVLEWSCGVSDYLAQMLALLRERYPDGNIACTRKAIPGTRLLASQAILAAGGLIHRAGCAETILLFANHRHFLHDNQDWSGAINQLRRHAPEKKIVVEADAPKEAIAALRAQPDVLQLDKFSPQQATEIAQIAPSLAPHCTLALTGGINLTTLKNYLDCGIRLFITSAPYYAAPADIKVSLQPAASI.

This sequence belongs to the NadC/ModD family.

This is Putative pyrophosphorylase ModD (modD) from Escherichia coli O127:H6 (strain E2348/69 / EPEC).